Reading from the N-terminus, the 144-residue chain is Transcription antitermination protein NusB (144 aa).

This sequence belongs to the NusB family.

Involved in transcription antitermination. Required for transcription of ribosomal RNA (rRNA) genes. Binds specifically to the boxA antiterminator sequence of the ribosomal RNA (rrn) operons. In Dictyoglomus turgidum (strain DSM 6724 / Z-1310), this protein is Transcription antitermination protein NusB.